The chain runs to 649 residues: Acetyl-coenzyme A synthetase (649 aa).

Residues 189 to 192, Thr-311, and Asn-335 contribute to the CoA site; that span reads RGGK. ATP is bound by residues 387-389, 411-416, Asp-500, and Arg-515; these read GEP and DTWWQT. Residue Ser-523 participates in CoA binding. Arg-526 is a binding site for ATP. Val-537, His-539, and Val-542 together coordinate Mg(2+). Position 584 (Arg-584) interacts with CoA. Lys-609 bears the N6-acetyllysine mark.

It belongs to the ATP-dependent AMP-binding enzyme family. Requires Mg(2+) as cofactor. Post-translationally, acetylated. Deacetylation by the SIR2-homolog deacetylase activates the enzyme.

It catalyses the reaction acetate + ATP + CoA = acetyl-CoA + AMP + diphosphate. Catalyzes the conversion of acetate into acetyl-CoA (AcCoA), an essential intermediate at the junction of anabolic and catabolic pathways. AcsA undergoes a two-step reaction. In the first half reaction, AcsA combines acetate with ATP to form acetyl-adenylate (AcAMP) intermediate. In the second half reaction, it can then transfer the acetyl group from AcAMP to the sulfhydryl group of CoA, forming the product AcCoA. The chain is Acetyl-coenzyme A synthetase from Sinorhizobium medicae (strain WSM419) (Ensifer medicae).